We begin with the raw amino-acid sequence, 302 residues long: Dihydroorotate dehydrogenase B (NAD(+)), catalytic subunit (302 aa).

FMN contacts are provided by residues Ser23 and 47-48 (KG). Residues Lys47 and 71-75 (NSVGL) each bind substrate. FMN is bound by residues Asn101 and Asn128. Asn128 provides a ligand contact to substrate. Cys131 functions as the Nucleophile in the catalytic mechanism. FMN is bound by residues Lys166 and Ile192. 193 to 194 (NT) is a substrate binding site. FMN contacts are provided by residues Gly218, 244 to 245 (GG), and 266 to 267 (GT).

The protein belongs to the dihydroorotate dehydrogenase family. Type 1 subfamily. As to quaternary structure, heterotetramer of 2 PyrK and 2 PyrD type B subunits. Requires FMN as cofactor.

It localises to the cytoplasm. It catalyses the reaction (S)-dihydroorotate + NAD(+) = orotate + NADH + H(+). It functions in the pathway pyrimidine metabolism; UMP biosynthesis via de novo pathway; orotate from (S)-dihydroorotate (NAD(+) route): step 1/1. Its function is as follows. Catalyzes the conversion of dihydroorotate to orotate with NAD(+) as electron acceptor. The sequence is that of Dihydroorotate dehydrogenase B (NAD(+)), catalytic subunit (pyrD) from Alkaliphilus metalliredigens (strain QYMF).